We begin with the raw amino-acid sequence, 140 residues long: MKFIITLFAAIVMAAAVSGFIVGDKKEDEWRMAFDRLMMEELETKIDQVEKGLLHLSEQYKELEKTKSKELKEQILRELTIGENFMKGALKFFEMEAKRTDLNMFERYNYEFALESIKLLIKKLDELAKKVKAVNPDEYY.

A signal peptide spans 1–19 (MKFIITLFAAIVMAAAVSG). 2 immunodominant conformational IgE-binding epitope regions span residues 20–53 (FIVG…EKGL) and 108–140 (YNYE…DEYY).

The protein belongs to the mite group 5 allergen family. As to quaternary structure, monomer. Homodimer. In terms of tissue distribution, expressed in the epithelium, lumen and microvilli of the midgut, and in feces.

The protein localises to the cytoplasm. Its subcellular location is the endoplasmic reticulum. It is found in the vesicle. The protein resides in the secreted. The polypeptide is Mite allergen Der p 21.0101 (Dermatophagoides pteronyssinus (European house dust mite)).